The chain runs to 150 residues: Globin (150 aa).

The 140-residue stretch at 11 to 150 (PLSAAEKTKI…MICILLRSAY (140 aa)) folds into the Globin domain. 2 residues coordinate heme b: His74 and His106.

This sequence belongs to the globin family. In terms of assembly, monomer.

This Lampetra fluviatilis (European river lamprey) protein is Globin.